The following is a 102-amino-acid chain: MAGQKIRIRLKAYDHEVIDSSAKKIVETVTRTGAKVAGPVPLPTEKNVYCVIRSPHNDKDSREHFEMRTHKRLIDIIDPTPKTVDSLMRLDLPAGVDISIKL.

This sequence belongs to the universal ribosomal protein uS10 family. In terms of assembly, part of the 30S ribosomal subunit.

In terms of biological role, involved in the binding of tRNA to the ribosomes. In Planobispora rosea, this protein is Small ribosomal subunit protein uS10.